Consider the following 119-residue polypeptide: RIIa domain-containing protein 1 (119 aa).

The RIIa domain occupies 70–104 (KEVSLLISGFFREMFLKRPDNILEFAAHYFTDPRL).

Abundant in tissues rich in highly ciliated cells, such as testis, trachea and olfactory epithelium.

In Mus musculus (Mouse), this protein is RIIa domain-containing protein 1 (Riiad1).